A 101-amino-acid polypeptide reads, in one-letter code: uncharacterized protein (101 aa).

Residues 17-37 (VIKILLISGISRIIILILAMF) form a helical membrane-spanning segment.

The protein localises to the endoplasmic reticulum membrane. This is an uncharacterized protein from Schizosaccharomyces pombe (strain 972 / ATCC 24843) (Fission yeast).